Here is a 129-residue protein sequence, read N- to C-terminus: Protein yippee-like At5g53940 (129 aa).

Residues R12 to I109 form the Yippee domain. C16, C19, C72, and C75 together coordinate Zn(2+).

It belongs to the yippee family.

This Arabidopsis thaliana (Mouse-ear cress) protein is Protein yippee-like At5g53940.